Reading from the N-terminus, the 122-residue chain is Large ribosomal subunit protein uL14 (122 aa).

Belongs to the universal ribosomal protein uL14 family. As to quaternary structure, part of the 50S ribosomal subunit. Forms a cluster with proteins L3 and L19. In the 70S ribosome, L14 and L19 interact and together make contacts with the 16S rRNA in bridges B5 and B8.

Functionally, binds to 23S rRNA. Forms part of two intersubunit bridges in the 70S ribosome. The protein is Large ribosomal subunit protein uL14 of Shewanella loihica (strain ATCC BAA-1088 / PV-4).